Consider the following 251-residue polypeptide: Triosephosphate isomerase (251 aa).

9–11 serves as a coordination point for substrate; that stretch reads NWK. H95 serves as the catalytic Electrophile. E167 functions as the Proton acceptor in the catalytic mechanism. Residues G173, S213, and 234–235 each bind substrate; that span reads GG.

The protein belongs to the triosephosphate isomerase family. In terms of assembly, homodimer.

The protein localises to the cytoplasm. It carries out the reaction D-glyceraldehyde 3-phosphate = dihydroxyacetone phosphate. The protein operates within carbohydrate biosynthesis; gluconeogenesis. It participates in carbohydrate degradation; glycolysis; D-glyceraldehyde 3-phosphate from glycerone phosphate: step 1/1. Its function is as follows. Involved in the gluconeogenesis. Catalyzes stereospecifically the conversion of dihydroxyacetone phosphate (DHAP) to D-glyceraldehyde-3-phosphate (G3P). The polypeptide is Triosephosphate isomerase (Pelobacter propionicus (strain DSM 2379 / NBRC 103807 / OttBd1)).